Consider the following 569-residue polypeptide: Mitogen-activated protein kinase 8 (569 aa).

Residues 13-304 enclose the Protein kinase domain; the sequence is YKIQEVIGKG…AEEALADPYF (292 aa). ATP contacts are provided by residues 19 to 27 and Lys42; that span reads IGKGSYGVV. Catalysis depends on Asp139, which acts as the Proton acceptor. Thr175 is subject to Phosphothreonine. The TXY motif lies at 175–177; the sequence is TDY. Tyr177 carries the phosphotyrosine modification. Residues 404-432 are disordered; it reads TTVHSAPIPPKDHQNITSQVPQRIPGRTG.

Belongs to the protein kinase superfamily. CMGC Ser/Thr protein kinase family. MAP kinase subfamily. Post-translationally, dually phosphorylated on Thr-175 and Tyr-177, which activates the enzyme. In terms of tissue distribution, expressed in leaves and panicles.

The catalysed reaction is L-seryl-[protein] + ATP = O-phospho-L-seryl-[protein] + ADP + H(+). The enzyme catalyses L-threonyl-[protein] + ATP = O-phospho-L-threonyl-[protein] + ADP + H(+). Activated by threonine and tyrosine phosphorylation. In Oryza sativa subsp. japonica (Rice), this protein is Mitogen-activated protein kinase 8 (MPK8).